A 277-amino-acid chain; its full sequence is Sulfur carrier protein FdhD (277 aa).

The active-site Cysteine persulfide intermediate is the Cys121. 260-265 is a binding site for Mo-bis(molybdopterin guanine dinucleotide); that stretch reads FCKPGR.

It belongs to the FdhD family.

The protein localises to the cytoplasm. Functionally, required for formate dehydrogenase (FDH) activity. Acts as a sulfur carrier protein that transfers sulfur from IscS to the molybdenum cofactor prior to its insertion into FDH. In Escherichia coli O6:H1 (strain CFT073 / ATCC 700928 / UPEC), this protein is Sulfur carrier protein FdhD.